The primary structure comprises 368 residues: GTPase Obg (368 aa).

In terms of domain architecture, Obg spans 1–159 (MQFIDQAEIE…RQLRLELKLL (159 aa)). The region spanning 160 to 328 (AEVGIIGLPN…LMQLVWQWLD (169 aa)) is the OBG-type G domain. GTP is bound by residues 166–173 (GLPNAGKS), 191–195 (FTTLV), 213–216 (DIPG), 280–283 (NKID), and 309–311 (SAA). Mg(2+) contacts are provided by Ser173 and Thr193.

Belongs to the TRAFAC class OBG-HflX-like GTPase superfamily. OBG GTPase family. Monomer. It depends on Mg(2+) as a cofactor.

It is found in the cytoplasm. In terms of biological role, an essential GTPase which binds GTP, GDP and possibly (p)ppGpp with moderate affinity, with high nucleotide exchange rates and a fairly low GTP hydrolysis rate. Plays a role in control of the cell cycle, stress response, ribosome biogenesis and in those bacteria that undergo differentiation, in morphogenesis control. The sequence is that of GTPase Obg from Synechocystis sp. (strain ATCC 27184 / PCC 6803 / Kazusa).